Here is a 278-residue protein sequence, read N- to C-terminus: Large ribosomal subunit protein uL2 (278 aa).

Positions 210–219 (RKRWLGKRPQ) are enriched in basic residues. A disordered region spans residues 210 to 278 (RKRWLGKRPQ…LIIRHRKGSK (69 aa)). A compositionally biased stretch (basic and acidic residues) spans 258 to 270 (KTRDVKKASEKLI).

This sequence belongs to the universal ribosomal protein uL2 family. As to quaternary structure, part of the 50S ribosomal subunit. Forms a bridge to the 30S subunit in the 70S ribosome.

One of the primary rRNA binding proteins. Required for association of the 30S and 50S subunits to form the 70S ribosome, for tRNA binding and peptide bond formation. It has been suggested to have peptidyltransferase activity; this is somewhat controversial. Makes several contacts with the 16S rRNA in the 70S ribosome. The sequence is that of Large ribosomal subunit protein uL2 from Lactobacillus acidophilus (strain ATCC 700396 / NCK56 / N2 / NCFM).